Reading from the N-terminus, the 592-residue chain is Bifunctional purine biosynthesis protein ADE17 (592 aa).

The region spanning 1–147 (MANYTKTAIL…KNHARVTILS (147 aa)) is the MGS-like domain. IMP-binding positions include 35–38 (SGGT), 65–68 (RVKT), 102–103 (CN), and 126–127 (DI). Residue Lys-138 is the Proton donor/acceptor; for FAICAR cyclization activity of the active site. 5-amino-1-(5-phospho-beta-D-ribosyl)imidazole-4-carboxamide is bound by residues 206-207 (RY), His-267, Gly-315, Asp-338, Asn-430, and Arg-450. His-267 (proton acceptor; for AICAR formyltransferase activity) is an active-site residue. Position 451 (Ile-451) interacts with (6R)-10-formyltetrahydrofolate. 5-amino-1-(5-phospho-beta-D-ribosyl)imidazole-4-carboxamide is bound at residue Phe-541. (6R)-10-formyltetrahydrofolate contacts are provided by residues Asp-546 and 565–566 (SV). Arg-588 is a binding site for 5-amino-1-(5-phospho-beta-D-ribosyl)imidazole-4-carboxamide.

Belongs to the PurH family. As to quaternary structure, homodimer.

The protein localises to the cytoplasm. It localises to the cytosol. The catalysed reaction is (6R)-10-formyltetrahydrofolate + 5-amino-1-(5-phospho-beta-D-ribosyl)imidazole-4-carboxamide = 5-formamido-1-(5-phospho-D-ribosyl)imidazole-4-carboxamide + (6S)-5,6,7,8-tetrahydrofolate. It carries out the reaction IMP + H2O = 5-formamido-1-(5-phospho-D-ribosyl)imidazole-4-carboxamide. It participates in purine metabolism; IMP biosynthesis via de novo pathway; 5-formamido-1-(5-phospho-D-ribosyl)imidazole-4-carboxamide from 5-amino-1-(5-phospho-D-ribosyl)imidazole-4-carboxamide (10-formyl THF route): step 1/1. It functions in the pathway purine metabolism; IMP biosynthesis via de novo pathway; IMP from 5-formamido-1-(5-phospho-D-ribosyl)imidazole-4-carboxamide: step 1/1. Bifunctional enzyme that catalyzes the last two steps of purine biosynthesis. Acts as a transformylase that incorporates a formyl group to the AMP analog AICAR (5-amino-1-(5-phospho-beta-D-ribosyl)imidazole-4-carboxamide) to produce the intermediate formyl-AICAR (FAICAR). Also catalyzes the cyclization of FAICAR to IMP. This is Bifunctional purine biosynthesis protein ADE17 from Saccharomyces cerevisiae (strain ATCC 204508 / S288c) (Baker's yeast).